Reading from the N-terminus, the 293-residue chain is Sphingolipid C4-hydroxylase sur2 (293 aa).

A run of 3 helical transmembrane segments spans residues 18 to 38 (LVSP…LHYI), 68 to 88 (AVLF…MFEG), and 127 to 147 (FIVP…WQYF). The region spanning 136-270 (FAFFIIDSWQ…FTFWDHVLGT (135 aa)) is the Fatty acid hydroxylase domain.

Belongs to the sterol desaturase family.

The protein localises to the endoplasmic reticulum membrane. It participates in membrane lipid metabolism; sphingolipid biosynthesis. In terms of biological role, required for hydroxylation of C-4 in the sphingoid moiety of ceramide. Involved in the response to syringomycin. The chain is Sphingolipid C4-hydroxylase sur2 (sur2) from Schizosaccharomyces pombe (strain 972 / ATCC 24843) (Fission yeast).